Reading from the N-terminus, the 373-residue chain is HAUS augmin-like complex subunit 8 (373 aa).

Basic and acidic residues-rich tracts occupy residues 1–10, 32–43, and 52–73; these read MADSSERDAG, RVVESRYLQYDK, and AKEE…REES. The disordered stretch occupies residues 1-76; it reads MADSSERDAG…PRSREESQVM (76 aa). Position 2 is an N-acetylalanine (alanine 2). Residue serine 99 is modified to Phosphoserine. Residues 130-204 adopt a coiled-coil conformation; that stretch reads DKKRILRKKR…LRRQLLLRQK (75 aa).

The protein belongs to the HAUS8 family. In terms of assembly, component of the HAUS augmin-like complex. The complex interacts with the gamma-tubulin ring complex and this interaction is required for spindle assembly. Associates with microtubules. The interaction with microtubules is strong during mitosis, while it is weak or absent during interphase. It is unclear whether this interaction is direct or indirect. Interacts with EML3 (phosphorylated at 'Thr-882') and TUBG1.

The protein resides in the cytoplasm. It is found in the cytoskeleton. It localises to the microtubule organizing center. Its subcellular location is the centrosome. The protein localises to the spindle. The protein resides in the spindle pole. Functionally, contributes to mitotic spindle assembly, maintenance of centrosome integrity and completion of cytokinesis as part of the HAUS augmin-like complex. The protein is HAUS augmin-like complex subunit 8 (Haus8) of Mus musculus (Mouse).